The sequence spans 278 residues: Aliphatic sulfonates import ATP-binding protein SsuB (278 aa).

Residues 15 to 236 (LVLRDLSKRF…SQGDAAFAAL (222 aa)) enclose the ABC transporter domain. Residue 47-54 (GRSGCGKS) coordinates ATP. Positions 251-264 (PERESFTHPNDGEP) are enriched in basic and acidic residues. The segment at 251–278 (PERESFTHPNDGEPRWPGVPAHGVRWAV) is disordered.

The protein belongs to the ABC transporter superfamily. Aliphatic sulfonates importer (TC 3.A.1.17.2) family. The complex is composed of two ATP-binding proteins (SsuB), two transmembrane proteins (SsuC) and a solute-binding protein (SsuA).

It localises to the cell inner membrane. The catalysed reaction is ATP + H2O + aliphatic sulfonate-[sulfonate-binding protein]Side 1 = ADP + phosphate + aliphatic sulfonateSide 2 + [sulfonate-binding protein]Side 1.. In terms of biological role, part of the ABC transporter complex SsuABC involved in aliphatic sulfonates import. Responsible for energy coupling to the transport system. This is Aliphatic sulfonates import ATP-binding protein SsuB from Albidiferax ferrireducens (strain ATCC BAA-621 / DSM 15236 / T118) (Rhodoferax ferrireducens).